The primary structure comprises 163 residues: Pheromone-binding protein 1 (163 aa).

A signal peptide spans 1 to 21; sequence MLGKISLLLLPVFVAINLVHS. 3 disulfide bridges follow: cysteine 40/cysteine 75, cysteine 71/cysteine 129, and cysteine 118/cysteine 138.

Belongs to the PBP/GOBP family. As to expression, antenna.

Functionally, this major soluble protein in olfactory sensilla of male moths might serve to solubilize the extremely hydrophobic pheromone molecules and to transport pheromone through the aqueous lymph to receptors located on olfactory cilia. The polypeptide is Pheromone-binding protein 1 (Antheraea pernyi (Chinese oak silk moth)).